The sequence spans 286 residues: Beta-lactamase SHV-1 (286 aa).

Positions 1 to 21 (MRYIRLCIISLLATLPLAVHA) are cleaved as a signal peptide. Catalysis depends on serine 66, which acts as the Acyl-ester intermediate. Cysteines 73 and 119 form a disulfide. The active-site Proton acceptor is the glutamate 164. A substrate-binding site is contributed by 230–232 (KTG).

This sequence belongs to the class-A beta-lactamase family.

It carries out the reaction a beta-lactam + H2O = a substituted beta-amino acid. The protein is Beta-lactamase SHV-1 (bla) of Escherichia coli.